A 179-amino-acid chain; its full sequence is UPF0316 protein BH0621 (179 aa).

Helical transmembrane passes span 9–29 (ALTM…LFTV), 41–61 (LAAT…SLVL), and 67–87 (IENL…GMKV).

It belongs to the UPF0316 family.

Its subcellular location is the cell membrane. This Halalkalibacterium halodurans (strain ATCC BAA-125 / DSM 18197 / FERM 7344 / JCM 9153 / C-125) (Bacillus halodurans) protein is UPF0316 protein BH0621.